Here is a 246-residue protein sequence, read N- to C-terminus: Ubiquinone biosynthesis O-methyltransferase (246 aa).

S-adenosyl-L-methionine is bound by residues Arg44, Gly63, Asp84, and Met128.

It belongs to the methyltransferase superfamily. UbiG/COQ3 family.

The enzyme catalyses a 3-demethylubiquinol + S-adenosyl-L-methionine = a ubiquinol + S-adenosyl-L-homocysteine + H(+). The catalysed reaction is a 3-(all-trans-polyprenyl)benzene-1,2-diol + S-adenosyl-L-methionine = a 2-methoxy-6-(all-trans-polyprenyl)phenol + S-adenosyl-L-homocysteine + H(+). Its pathway is cofactor biosynthesis; ubiquinone biosynthesis. Functionally, O-methyltransferase that catalyzes the 2 O-methylation steps in the ubiquinone biosynthetic pathway. The sequence is that of Ubiquinone biosynthesis O-methyltransferase from Xylella fastidiosa (strain Temecula1 / ATCC 700964).